A 3122-amino-acid chain; its full sequence is tRNA nuclease CdiA-2 (3122 aa).

The interval 36 to 205 (RAGVVPAWLS…ATLTTGNPNF (170 aa)) is two-partner system transport domain (TPS). Residues 54-74 (VALAVLVAAGVVPIWVNAQVV) form a helical membrane-spanning segment. The tract at residues 256–1254 (VVAGSNQVDY…GGSVAIQASG (999 aa)) is FHA-1. Residues 492–512 (GMTLGGGSLSNQGGRANSQGP) form a disordered region. Positions 500 to 512 (LSNQGGRANSQGP) are enriched in polar residues. The segment at 1345–1635 (TRRVMQTSGN…SATAVNVLSN (291 aa)) is receptor binding domain (RBD). A periplasmic FHA-1 repeat (pFR) region spans residues 1790 to 1845 (TAGNIDLKNTQVFTNSGTVKADTTLALQGKQIDNAFGALQSGGLTSLDTTGNVDLT). Positions 1947–2085 (SDTDLNSATG…TERHVYNSRE (139 aa)) are FHA-2. 3 disordered regions span residues 2002–2031 (TSTINANSSGDQGNRSYAETRHGSDQALTG), 2151–2174 (TTSQDTSQSSTTYQEQHSGLMSGG), and 2325–2352 (IGVQVSVGSSHSSMQSSEDQTIQRGSSI). The tract at residues 2086–2825 (THSRSGVVSG…SAGAAMASNV (740 aa)) is pretoxin (PT) domain. Composition is skewed to low complexity over residues 2151–2170 (TTSQDTSQSSTTYQEQHSGL) and 2325–2341 (IGVQVSVGSSHSSMQSS). Polar residues predominate over residues 2342–2352 (EDQTIQRGSSI). Residues 2821–3122 (MASNVELYNA…NITIIKPKGN (302 aa)) form a C-terminal effector domain (CT), has tRNA nuclease activity region. Residues 2826-2829 (ELYN) carry the ELYN C-terminal motif motif. The disordered stretch occupies residues 2948-3000 (GATDRTPPSNAILSNSNSDNNSTQGSQSGTVTKTPNPEATGSLSGKPTQIPPL). The interval 2948-3122 (GATDRTPPSN…NITIIKPKGN (175 aa)) is truncated CT domain, has tRNA nuclease activity, sufficient for interaction with CdiI-2. The segment covering 2953–2994 (TPPSNAILSNSNSDNNSTQGSQSGTVTKTPNPEATGSLSGKP) has biased composition (polar residues). A has tRNase activity region spans residues 2987-3122 (TGSLSGKPTQ…NITIIKPKGN (136 aa)). Catalysis depends on residues Glu3012, Asp3039, Asp3048, and Lys3067.

In the N-terminal section; belongs to the CdiA toxin family. As to quaternary structure, interacts with cognate immunity protein CdiI, which blocks its tRNA nuclease activity. The truncated CT fragment (residues 2948-3122) specifically interacts with cognate CdiI which inhibits the tRNA nuclease activity. The truncated CT is more stable in vitro than the original CT fragment characterized in E.coli.

The protein localises to the membrane. It localises to the secreted. It is found in the target cell. Its subcellular location is the target cell cytoplasm. Its function is as follows. Toxic component of a toxin-immunity protein module, which functions as a cellular contact-dependent growth inhibition (CDI) system. CDI modules allow bacteria to communicate with and inhibit the growth of closely related neighboring bacteria in a contact-dependent fashion. The C-terminal 301 residues (the CT fragment) cleaves near the C-terminus of E.coli tRNA1B(Ala), probably preventing tRNA charging, and inhibits growth in E.coli. A truncated CT fragment (residues 2948-3122) has tRNA endonuclease activity on several B.thailandensis tRNAs as well as tRNA2(Arg) where it cleaves after A-70 and U-71. Inactive CT domain binds tRNA, probably in a 1:1 complex. Toxic activity is neutralized by coexpression of the cognate immunity protein CdiI in E.coli, but not by non-cognate immunity proteins from other strains of B.pseudomallei. May use lipopolysaccharide as its target cell receptor. Probably gains access to the cytoplasm of target cells (B.thailandensis strain E264) by using integral inner membrane protein BTH_II0599. Protein BTH_I0359 is also implicated in an unknown fashion in CDI in B.thailandensis strain E264. Expression of this cdiAIB locus in B.thailandensis confers protection against other bacteria carrying the locus; growth inhibition requires cellular contact. In terms of biological role, the CdiA protein is thought to be exported from the cell through the central lumen of CdiB, the other half of its two-partner system (TPS). The TPS domain probably remains associated with CdiB while the FHA-1 domain forms an extended filament with the receptor-binding domain (RBD) at its extremity; in the secretion arrested state the C-terminus of the RBD domain form a hairpin-like structure as the FHA-2, PT and CT domains are periplasmic. Upon binding to a target cell outer membrane receptor (possibly a lipoprotein in this CDI) a signal is transmitted to activate secretion. The filament elongates slightly, the rest of CdiA is secreted and the FHA-2 domain becomes stably associated with the target cell's outer membrane where it facilitates entry of the toxic CT domain into the target cell periplasm. From there the toxic CT domain is cleaved and gains access to the target cell cytoplasm via an inner membrane protein (probably inner membrane protein BTH_II0599). The polypeptide is tRNA nuclease CdiA-2 (cdiA2) (Burkholderia pseudomallei (strain 1026b)).